We begin with the raw amino-acid sequence, 455 residues long: Chromosomal replication initiator protein DnaA (455 aa).

A domain I, interacts with DnaA modulators region spans residues 1 to 82 (MNRNTSSLWA…NPDFVVKLVE (82 aa)). The tract at residues 82 to 117 (EGVKPAPKQNNIVTTKQNAETAVDSEQHLQSVEFKT) is domain II. Residues 118–335 (GLNSNHLFEN…GALNRVIANA (218 aa)) are domain III, AAA+ region. ATP is bound by residues Gly-163, Gly-165, Lys-166, and Thr-167. The interval 336-455 (EFTGKTITID…WSNLIRTLSA (120 aa)) is domain IV, binds dsDNA.

It belongs to the DnaA family. As to quaternary structure, oligomerizes as a right-handed, spiral filament on DNA at oriC.

It is found in the cytoplasm. Functionally, plays an essential role in the initiation and regulation of chromosomal replication. ATP-DnaA binds to the origin of replication (oriC) to initiate formation of the DNA replication initiation complex once per cell cycle. Binds the DnaA box (a 9 base pair repeat at the origin) and separates the double-stranded (ds)DNA. Forms a right-handed helical filament on oriC DNA; dsDNA binds to the exterior of the filament while single-stranded (ss)DNA is stabiized in the filament's interior. The ATP-DnaA-oriC complex binds and stabilizes one strand of the AT-rich DNA unwinding element (DUE), permitting loading of DNA polymerase. After initiation quickly degrades to an ADP-DnaA complex that is not apt for DNA replication. Binds acidic phospholipids. The protein is Chromosomal replication initiator protein DnaA of Actinobacillus succinogenes (strain ATCC 55618 / DSM 22257 / CCUG 43843 / 130Z).